Consider the following 302-residue polypeptide: Tegument protein VP22 (302 aa).

The span at 1-10 shows a compositional bias: basic and acidic residues; sequence MASSDGDRLC. Disordered stretches follow at residues 1-42 and 125-170; these read MASS…PDDS and SFTK…SSWC. An interaction with gE region spans residues 154-244; the sequence is RPISFSTAPK…ANEADLGEGA (91 aa). Residues 157-170 show a composition bias toward polar residues; the sequence is SFSTAPKTATSSWC. The Nuclear export signal signature appears at 212-224; it reads LDRLLTGAVIRIT. The tract at residues 243-302 is disordered; that stretch reads GASVSKRGHNRKTGDLQGGMGNEPMYAQVRKPKSRTDTQTTGRITNRSRARSASRTDTRK.

This sequence belongs to the alphaherpesvirinae VP22 tegument protein family. Interacts with gE (via C-terminus); this interaction is necessary for the recruitment of VP22/ORF9 to the Golgi and its packaging into virions. Interacts with gM (via C-terminus). Interacts with VP16/ORF10; this interaction allows the formation of a tripartite complex composed of VP16/ORF10, VP22/ORF9 and VHS/ORF17. Interacts with the capsid-binding protein ORF44. Interacts with host CGAS. In terms of processing, highly phosphorylated in the host cell. Packaging is selective for underphosphorylated forms.

The protein resides in the virion tegument. The protein localises to the host cytoplasm. Its subcellular location is the host nucleus. It is found in the host Golgi apparatus. Tegument protein that plays different roles during the time course of infection. Participates in both the accumulation of viral mRNAs and viral protein translation at late time of infection. Modulates the RNase activity of the virion host shutoff protein ORF17 probably to ensure necessary levels of key cellular mRNAs and proteins. Plays a role in microtubule reorganization that occurs after viral infection by stabilizing microtubule network. Plays a role in the inhibition of host innate immune system by targeting the CGAS enzymatic activity which is the principal cytosolic DNA sensor that detects invading viral DNA. Acts by mediating disruption of liquid-like droplets in which CGAS is activated, thereby preventing CGAS activity. This is Tegument protein VP22 from Homo sapiens (Human).